Here is a 301-residue protein sequence, read N- to C-terminus: Glycine--tRNA ligase alpha subunit (301 aa).

This sequence belongs to the class-II aminoacyl-tRNA synthetase family. Tetramer of two alpha and two beta subunits.

It localises to the cytoplasm. It catalyses the reaction tRNA(Gly) + glycine + ATP = glycyl-tRNA(Gly) + AMP + diphosphate. This Shewanella baltica (strain OS223) protein is Glycine--tRNA ligase alpha subunit.